The sequence spans 425 residues: 2-methylserine hydroxymethyltransferase (425 aa).

(6S)-5,6,7,8-tetrahydrofolate is bound by residues L126 and 130–132; that span reads GHL. K235 carries the N6-(pyridoxal phosphate)lysine modification. (6S)-5,6,7,8-tetrahydrofolate is bound at residue E251.

This sequence belongs to the SHMT family. As to quaternary structure, homodimer. It depends on pyridoxal 5'-phosphate as a cofactor.

The protein resides in the cytoplasm. The catalysed reaction is (6R)-5,10-methylene-5,6,7,8-tetrahydrofolate + D-alanine + H2O = 2-methylserine + (6S)-5,6,7,8-tetrahydrofolate. It functions in the pathway one-carbon metabolism; tetrahydrofolate interconversion. Functionally, catalyzes the reversible interconversion of alpha-methyl-L-serine to D-alanine with tetrahydrofolate (THF) serving as the one-carbon carrier. Cannot use alpha-methyl-D-serine, L-serine, D-serine or L-alanine. The protein is 2-methylserine hydroxymethyltransferase of Ensifer sp.